A 383-amino-acid polypeptide reads, in one-letter code: Acetylornithine deacetylase (383 aa).

Zn(2+) is bound at residue histidine 80. Residue aspartate 82 is part of the active site. Residue aspartate 112 participates in Zn(2+) binding. Glutamate 144 is an active-site residue. 3 residues coordinate Zn(2+): glutamate 145, glutamate 169, and histidine 355.

Belongs to the peptidase M20A family. ArgE subfamily. Homodimer. Zn(2+) is required as a cofactor. The cofactor is Co(2+). Glutathione serves as cofactor.

It localises to the cytoplasm. The catalysed reaction is N(2)-acetyl-L-ornithine + H2O = L-ornithine + acetate. The protein operates within amino-acid biosynthesis; L-arginine biosynthesis; L-ornithine from N(2)-acetyl-L-ornithine (linear): step 1/1. Catalyzes the hydrolysis of the amide bond of N(2)-acetylated L-amino acids. Cleaves the acetyl group from N-acetyl-L-ornithine to form L-ornithine, an intermediate in L-arginine biosynthesis pathway, and a branchpoint in the synthesis of polyamines. This chain is Acetylornithine deacetylase, found in Escherichia coli O157:H7.